Here is a 160-residue protein sequence, read N- to C-terminus: Siroheme decarboxylase NirH subunit (160 aa).

The protein belongs to the Ahb/Nir family. In terms of assembly, forms a complex composed of NirDL, NirG and NirH. All proteins are required for the total conversion of siroheme to didecarboxysiroheme.

The catalysed reaction is siroheme + 2 H(+) = 12,18-didecarboxysiroheme + 2 CO2. The protein operates within porphyrin-containing compound metabolism. In terms of biological role, involved in heme d1 biosynthesis. Catalyzes the decarboxylation of siroheme into didecarboxysiroheme. Siroheme is probably decarboxylated to monodecarboxysiroheme, which is in turn decarboxylated to didecarboxysiroheme. In Paracoccus pantotrophus (Thiosphaera pantotropha), this protein is Siroheme decarboxylase NirH subunit.